The following is a 210-amino-acid chain: Large ribosomal subunit protein bL25 (210 aa).

The disordered stretch occupies residues 186 to 210; that stretch reads ISSASTEKEAESNQESTSTTPSSES. A compositionally biased stretch (low complexity) spans 198–210; it reads NQESTSTTPSSES.

The protein belongs to the bacterial ribosomal protein bL25 family. CTC subfamily. Part of the 50S ribosomal subunit; part of the 5S rRNA/L5/L18/L25 subcomplex. Contacts the 5S rRNA. Binds to the 5S rRNA independently of L5 and L18.

Its function is as follows. This is one of the proteins that binds to the 5S RNA in the ribosome where it forms part of the central protuberance. The polypeptide is Large ribosomal subunit protein bL25 (Ehrlichia chaffeensis (strain ATCC CRL-10679 / Arkansas)).